We begin with the raw amino-acid sequence, 51 residues long: Large ribosomal subunit protein bL33 (51 aa).

The tract at residues 1–23 is disordered; it reads MREKIKLESSAGTGHFYTTTKNK. A compositionally biased stretch (polar residues) spans 10–20; sequence SAGTGHFYTTT.

The protein belongs to the bacterial ribosomal protein bL33 family.

The protein is Large ribosomal subunit protein bL33 of Nitrosomonas eutropha (strain DSM 101675 / C91 / Nm57).